The following is a 432-amino-acid chain: Enolase (432 aa).

Gln167 contributes to the (2R)-2-phosphoglycerate binding site. Glu209 acts as the Proton donor in catalysis. Positions 246, 291, and 318 each coordinate Mg(2+). 4 residues coordinate (2R)-2-phosphoglycerate: Lys343, Arg372, Ser373, and Lys394. Lys343 acts as the Proton acceptor in catalysis.

The protein belongs to the enolase family. Component of the RNA degradosome, a multiprotein complex involved in RNA processing and mRNA degradation. Requires Mg(2+) as cofactor.

The protein resides in the cytoplasm. Its subcellular location is the secreted. It localises to the cell surface. The enzyme catalyses (2R)-2-phosphoglycerate = phosphoenolpyruvate + H2O. It functions in the pathway carbohydrate degradation; glycolysis; pyruvate from D-glyceraldehyde 3-phosphate: step 4/5. Functionally, catalyzes the reversible conversion of 2-phosphoglycerate (2-PG) into phosphoenolpyruvate (PEP). It is essential for the degradation of carbohydrates via glycolysis. This chain is Enolase, found in Buchnera aphidicola subsp. Cinara cedri (strain Cc).